We begin with the raw amino-acid sequence, 258 residues long: Axonemal dynein light intermediate polypeptide 1 (258 aa).

Disordered stretches follow at residues 1–60 (MIPP…CVPD) and 202–231 (DLER…EEKK). Residues 176 to 255 (MRKALQAEQG…LKAQLEGIIA (80 aa)) adopt a coiled-coil conformation.

It belongs to the inner dynein arm light chain family. Interacts with CFAP45. Interacts with DYNC1H1.

The protein localises to the cell projection. It is found in the cilium. Its subcellular location is the flagellum. It localises to the dynein axonemal particle. The protein resides in the cytoplasm. In terms of biological role, involved in sperm flagellum assembly. This Rattus norvegicus (Rat) protein is Axonemal dynein light intermediate polypeptide 1.